Consider the following 225-residue polypeptide: Probable manganese catalase (225 aa).

E37 is a binding site for Mn(2+). Ca(2+)-binding residues include D58 and D62. E67, H70, E138, and H171 together coordinate Mn(2+). Residue S204 coordinates Ca(2+). The disordered stretch occupies residues 204–225 (STPGRYVQDPNPTEPSFSNPRR). A compositionally biased stretch (polar residues) spans 213 to 225 (PNPTEPSFSNPRR).

The protein belongs to the manganese catalase family. It depends on Ca(2+) as a cofactor. Requires Mn(2+) as cofactor.

The enzyme catalyses 2 H2O2 = O2 + 2 H2O. Functionally, catalyzes the decomposition of hydrogen peroxide into water and oxygen. This chain is Probable manganese catalase, found in Clostridium acetobutylicum (strain ATCC 824 / DSM 792 / JCM 1419 / IAM 19013 / LMG 5710 / NBRC 13948 / NRRL B-527 / VKM B-1787 / 2291 / W).